Consider the following 338-residue polypeptide: MSEISNRLEARLAREWQQRGPLAWALTPFACVFGAIAAARRAAFSFGWLKSVRVGVPVVVVGNVTVGGTGKTPTVIALVEALRVAGFNPGVVSRGYGARVTTPTQITPASAASVGGDEPLLISRRTGAPVWVCPDRVAAAQALCAAHREVDVIVSDDGLQHYRLQRDVELVVFDHRLGGNGFLLPAGPLREPLSRRRDATLINDPYARTLPAWPNTFALQLAPGDAWHLDNPALRRPLAQFSGDRVLAAAGIGAPERFFATLRAAGLTPATRALPDHYAFERNPFTDVDADTILITEKDAVKLGSWHDARIWVVPVEAALDHRLIALVVEKVRGRSPA.

65 to 72 contacts ATP; it reads TVGGTGKT.

It belongs to the LpxK family.

It catalyses the reaction a lipid A disaccharide + ATP = a lipid IVA + ADP + H(+). It functions in the pathway glycolipid biosynthesis; lipid IV(A) biosynthesis; lipid IV(A) from (3R)-3-hydroxytetradecanoyl-[acyl-carrier-protein] and UDP-N-acetyl-alpha-D-glucosamine: step 6/6. In terms of biological role, transfers the gamma-phosphate of ATP to the 4'-position of a tetraacyldisaccharide 1-phosphate intermediate (termed DS-1-P) to form tetraacyldisaccharide 1,4'-bis-phosphate (lipid IVA). The sequence is that of Tetraacyldisaccharide 4'-kinase from Paraburkholderia xenovorans (strain LB400).